A 315-amino-acid polypeptide reads, in one-letter code: Probable cell division protein WhiA (315 aa).

The segment at residues 277–311 is a DNA-binding region (H-T-H motif); that stretch reads SLQELGAMMPSGQISKSGVNHRLRKLNQIAEGYQQ.

The protein belongs to the WhiA family.

Functionally, involved in cell division and chromosome segregation. The chain is Probable cell division protein WhiA from Lacticaseibacillus casei (strain BL23) (Lactobacillus casei).